The following is a 508-amino-acid chain: Photosystem II CP47 reaction center protein (508 aa).

Transmembrane regions (helical) follow at residues 21–36 (SVHI…WAGS), 101–115 (IVFS…IWHW), 140–156 (GIHL…FGAF), 203–218 (IAAG…FHLS), 237–252 (VLSS…AFVV), and 457–472 (SFAL…HGAR).

Belongs to the PsbB/PsbC family. PsbB subfamily. In terms of assembly, PSII is composed of 1 copy each of membrane proteins PsbA, PsbB, PsbC, PsbD, PsbE, PsbF, PsbH, PsbI, PsbJ, PsbK, PsbL, PsbM, PsbT, PsbX, PsbY, PsbZ, Psb30/Ycf12, at least 3 peripheral proteins of the oxygen-evolving complex and a large number of cofactors. It forms dimeric complexes. It depends on Binds multiple chlorophylls. PSII binds additional chlorophylls, carotenoids and specific lipids. as a cofactor.

It localises to the plastid. It is found in the chloroplast thylakoid membrane. Functionally, one of the components of the core complex of photosystem II (PSII). It binds chlorophyll and helps catalyze the primary light-induced photochemical processes of PSII. PSII is a light-driven water:plastoquinone oxidoreductase, using light energy to abstract electrons from H(2)O, generating O(2) and a proton gradient subsequently used for ATP formation. The protein is Photosystem II CP47 reaction center protein of Panax ginseng (Korean ginseng).